We begin with the raw amino-acid sequence, 320 residues long: ATP-dependent 6-phosphofructokinase (320 aa).

Residue G11 coordinates ATP. Residue 21-25 (RAVVR) coordinates ADP. ATP contacts are provided by residues 72–73 (RY) and 102–105 (GDGS). D103 contributes to the Mg(2+) binding site. 125–127 (TID) lines the substrate pocket. D127 acts as the Proton acceptor in catalysis. An ADP-binding site is contributed by R154. Substrate-binding positions include R162 and 169-171 (MGR). Residues 185 to 187 (GAD), R211, and 213 to 215 (KKH) each bind ADP. Substrate-binding positions include E222, R243, and 249–252 (HVVR).

The protein belongs to the phosphofructokinase type A (PFKA) family. ATP-dependent PFK group I subfamily. Prokaryotic clade 'B1' sub-subfamily. In terms of assembly, homotetramer. It depends on Mg(2+) as a cofactor.

The protein localises to the cytoplasm. It carries out the reaction beta-D-fructose 6-phosphate + ATP = beta-D-fructose 1,6-bisphosphate + ADP + H(+). The protein operates within carbohydrate degradation; glycolysis; D-glyceraldehyde 3-phosphate and glycerone phosphate from D-glucose: step 3/4. Allosterically activated by ADP and other diphosphonucleosides, and allosterically inhibited by phosphoenolpyruvate. In terms of biological role, catalyzes the phosphorylation of D-fructose 6-phosphate to fructose 1,6-bisphosphate by ATP, the first committing step of glycolysis. The protein is ATP-dependent 6-phosphofructokinase of Enterococcus faecalis (strain ATCC 700802 / V583).